The following is a 95-amino-acid chain: Acylphosphatase (95 aa).

Positions 5 to 93 (RAHLFIRGKV…GEFQDFRILP (89 aa)) constitute an Acylphosphatase-like domain. Active-site residues include R20 and N38.

This sequence belongs to the acylphosphatase family.

It carries out the reaction an acyl phosphate + H2O = a carboxylate + phosphate + H(+). The protein is Acylphosphatase (acyP) of Pyrobaculum arsenaticum (strain DSM 13514 / JCM 11321 / PZ6).